The primary structure comprises 1325 residues: Cyclic nucleotide-gated channel beta-1 (1325 aa).

Disordered stretches follow at residues 1-124, 147-198, 227-279, 340-470, 482-637, and 659-694; these read MLGW…QVAV, PQPV…SLWL, AVLD…PGDP, WEDA…LDSC, LERT…SQNS, and KEKL…PAEA. The Cytoplasmic portion of the chain corresponds to 1 to 732; the sequence is MLGWVQRVLP…SIDPLTNLMY (732 aa). Residues 43–81 show a composition bias toward acidic residues; sequence PQQEPEPEPEPEPEPEPEPEPEPEPEPEPEPEPVPEEAP. Polar residues predominate over residues 105–121; sequence LQETQVADPAQPTSQAQ. Positions 370–379 are enriched in basic and acidic residues; it reads IPRELTKIQE. Composition is skewed to acidic residues over residues 380-393, 418-463, and 495-517; these read ERED…EEKE, EEKE…EEEP, and LPEE…EEKK. Residues 518–527 are compositionally biased toward basic and acidic residues; the sequence is EEEVEKKEEG. Positions 560–571 are enriched in pro residues; it reads TLPPPERPPPSP. The tract at residues 633-643 is calmodulin-binding CaM1; sequence ASQNSAIINDR. A helical membrane pass occupies residues 733–754; sequence ILWLFFVVLAWNWNCWLIPVRW. The Extracellular portion of the chain corresponds to 755–763; it reads AFPYQRADN. Residues 764–785 traverse the membrane as a helical segment; the sequence is IHFWLLMDYLCDFIYLLDITVF. Residues 786 to 800 are Cytoplasmic-facing; sequence QMRLQFVKGGDIITD. A helical transmembrane segment spans residues 801–820; it reads KKEMRNNYLKSRRFKMDLLC. The Extracellular portion of the chain corresponds to 821–836; the sequence is LLPLDFLYLKLGINPL. The chain crosses the membrane as a helical span at residues 837–849; the sequence is LRLPRCLKYMAFF. Residues 850–861 are Cytoplasmic-facing; that stretch reads EFNNRLEAILSK. Residues 862–884 form a helical membrane-spanning segment; that stretch reads AYVYRVIRTTAYLLYSLHLNSCL. Residues 862–961 form an ion conduction pathway region; the sequence is AYVYRVIRTT…IGQMRDVVGA (100 aa). At 885 to 907 the chain is on the extracellular side; the sequence is YYWASAFQGIGSTHWVYDGVGNS. The next 2 helical transmembrane spans lie at 908–934 and 935–960; these read YIRC…LFEI and VFQL…DVVG. Residues 961 to 1325 lie on the Cytoplasmic side of the membrane; the sequence is AATAGQTYYR…VLEEKKEGAE (365 aa). The C-linker stretch occupies residues 964–1040; the sequence is AGQTYYRSCM…SIVSKVALFQ (77 aa). Positions 1038–1142 are cNMP-binding domain; the sequence is LFQGCDRQMI…LDKKDLNEIL (105 aa). The tract at residues 1044–1160 is cyclic nucleotide-binding domain; sequence RQMIFDMLKR…LLRKKARRML (117 aa). Positions 1105, 1106, 1108, 1118, and 1119 each coordinate 3',5'-cyclic GMP. Arginine 1118 contacts 3',5'-cyclic AMP. Residues 1224-1230 form a calmodulin-binding CaM2 region; sequence QQQLLEQ. Low complexity predominate over residues 1226–1250; it reads QLLEQAKSSQEAGGEEGSGATDQPA. A disordered region spans residues 1226 to 1325; it reads QLLEQAKSSQ…VLEEKKEGAE (100 aa). Over residues 1262–1279 the composition is skewed to pro residues; it reads KPPGPPEPSAQSSPPPAS.

It belongs to the cyclic nucleotide-gated cation channel (TC 1.A.1.5) family. CNGB1 subfamily. Rod outer segments. Olfactory sensory neurons.

The protein localises to the cell projection. Its subcellular location is the cilium membrane. The catalysed reaction is Ca(2+)(in) = Ca(2+)(out). It catalyses the reaction Na(+)(in) = Na(+)(out). It carries out the reaction K(+)(in) = K(+)(out). The enzyme catalyses NH4(+)(in) = NH4(+)(out). The catalysed reaction is Rb(+)(in) = Rb(+)(out). It catalyses the reaction Li(+)(in) = Li(+)(out). It carries out the reaction Cs(+)(in) = Cs(+)(out). In terms of biological role, pore-forming subunit of the rod cyclic nucleotide-gated channel. Mediates rod photoresponses at dim light converting transient changes in intracellular cGMP levels into electrical signals. In the dark, cGMP levels are high and keep the channel open enabling a steady inward current carried by Na(+) and Ca(2+) ions that leads to membrane depolarization and neurotransmitter release from synaptic terminals. Upon photon absorption cGMP levels decline leading to channel closure and membrane hyperpolarization that ultimately slows neurotransmitter release and signals the presence of light, the end point of the phototransduction cascade. Pore-forming subunit of the olfactory cyclic nucleotide-gated channel. Operates in the cilia of olfactory sensory neurons where chemical stimulation of the odorant is converted to an electrical signal. Mediates odorant-induced cAMP-dependent Ca(2+) influx triggering neuron depolarization. The rise of intracellular Ca(2+) levels potentiates the olfactory response by activating Ca(2+)-dependent Cl(-) channels, but it also serves as a negative feedback signal to desensitize the channel for rapid adaptation to odorants. Conducts cGMP- and cAMP-gated ion currents, with permeability for monovalent and divalent cations. The selectivity for Ca(2+) over Na(+) increases with cGMP concentrations, whereas the selectivity among monovalent ions is independent of the cGMP levels. This is Cyclic nucleotide-gated channel beta-1 from Mus musculus (Mouse).